The chain runs to 260 residues: Histidinol-phosphatase (260 aa).

Residues glutamate 67, aspartate 83, isoleucine 85, and aspartate 86 each coordinate Mg(2+). Substrate is bound at residue glutamate 67. Substrate contacts are provided by residues 85–88 (IDGT), arginine 185, and aspartate 213. Aspartate 213 serves as a coordination point for Mg(2+).

This sequence belongs to the inositol monophosphatase superfamily. Requires Mg(2+) as cofactor.

It carries out the reaction L-histidinol phosphate + H2O = L-histidinol + phosphate. Its pathway is amino-acid biosynthesis; L-histidine biosynthesis; L-histidine from 5-phospho-alpha-D-ribose 1-diphosphate: step 8/9. Catalyzes the dephosphorylation of histidinol-phosphate to histidinol, the direct precursor of histidine. This chain is Histidinol-phosphatase (hisN), found in Mycobacterium tuberculosis (strain ATCC 25618 / H37Rv).